The sequence spans 626 residues: tRNA uridine 5-carboxymethylaminomethyl modification enzyme MnmG (626 aa).

Residue 13-18 coordinates FAD; it reads GGGHAG. 273–287 is a binding site for NAD(+); sequence GPRYCPSIEDKIHRF.

Belongs to the MnmG family. As to quaternary structure, homodimer. Heterotetramer of two MnmE and two MnmG subunits. The cofactor is FAD.

Its subcellular location is the cytoplasm. In terms of biological role, NAD-binding protein involved in the addition of a carboxymethylaminomethyl (cmnm) group at the wobble position (U34) of certain tRNAs, forming tRNA-cmnm(5)s(2)U34. The protein is tRNA uridine 5-carboxymethylaminomethyl modification enzyme MnmG of Acinetobacter baumannii (strain AYE).